The chain runs to 592 residues: Cryptochrome-2 (592 aa).

The 130-residue stretch at 21–150 (ASSVHWFRKG…EVVTENSHTL (130 aa)) folds into the Photolyase/cryptochrome alpha/beta domain. Lysine 29 participates in a covalent cross-link: Glycyl lysine isopeptide (Lys-Gly) (interchain with G-Cter in ubiquitin). Residue serine 89 is modified to Phosphoserine. Glycyl lysine isopeptide (Lys-Gly) (interchain with G-Cter in ubiquitin) cross-links involve residues lysine 125 and lysine 241. Serine 265 is subject to Phosphoserine; by MAPK. Serine 270 contributes to the FAD binding site. Serine 298 is subject to Phosphoserine. Glutamine 307 contributes to the FAD binding site. A Glycyl lysine isopeptide (Lys-Gly) (interchain with G-Cter in ubiquitin) cross-link involves residue lysine 347. Residues histidine 373 and 405-407 (DAD) each bind FAD. The segment at 389–488 (WVSWESGVRV…IIGVDYPRPI (100 aa)) is required for inhibition of CLOCK-BMAL1-mediated transcription. Glycyl lysine isopeptide (Lys-Gly) (interchain with G-Cter in ubiquitin) cross-links involve residues lysine 474 and lysine 503. Residues 532–592 (VAEPGSSQAG…PTQEPASKDS (61 aa)) form a disordered region. The span at 536 to 547 (GSSQAGSISNTG) shows a compositional bias: polar residues. Serine 553 is subject to Phosphoserine; by GSK3-beta. Serine 557 is subject to Phosphoserine; by DYRK1A and MAPK. The segment covering 582 to 592 (MPTQEPASKDS) has biased composition (polar residues).

It belongs to the DNA photolyase class-1 family. In terms of assembly, component of the circadian core oscillator, which includes the CRY proteins, CLOCK or NPAS2, BMAL1 or BMAL2, CSNK1D and/or CSNK1E, TIMELESS, and the PER proteins. Interacts with TIMELESS. Interacts directly with PER1, PER2 and PER3; interaction with PER2 inhibits its ubiquitination and vice versa. Interacts with CLOCK-BMAL1. Interacts with BMAL1. Interacts with CLOCK. Interacts with NFIL3. Interacts with FBXL3 and FBXL21. FBXL3, PER2 and the cofactor FAD compete for overlapping binding sites. FBXL3 cannot bind CRY2 that interacts already with PER2 or that contains bound FAD. Interacts with PPP5C (via TPR repeats); the interaction down-regulates the PPP5C phosphatase activity on CSNK1E. Interacts with nuclear receptors AR and NR3C1/GR; the interaction is ligand dependent. Interacts with PRKDC. Interacts with CIART. Interacts with DDB1, USP7 and TARDBP. Interacts with HNF4A. Interacts with PPARA. Interacts with PPARG in a ligand-dependent manner. Interacts with PPARD (via domain NR LBD) in a ligand-dependent manner. Interacts with NR1I2 (via domain NR LBD) in a ligand-dependent manner. Interacts with NR1I3 and VDR in a ligand-dependent manner. The cofactor is FAD. (6R)-5,10-methylene-5,6,7,8-tetrahydrofolate serves as cofactor. Post-translationally, phosphorylation on Ser-265 by MAPK is important for the inhibition of CLOCK-BMAL1-mediated transcriptional activity. Phosphorylation by CSKNE requires interaction with PER1 or PER2. Phosphorylated in a circadian manner at Ser-553 and Ser-557 in the suprachiasmatic nucleus (SCN) and liver. Phosphorylation at Ser-557 by DYRK1A promotes subsequent phosphorylation at Ser-553 by GSK3-beta: the two-step phosphorylation at the neighboring Ser residues leads to its proteasomal degradation. Ubiquitinated by the SCF(FBXL3) and SCF(FBXL21) complexes, regulating the balance between degradation and stabilization. The SCF(FBXL3) complex is mainly nuclear and mediates ubiquitination and subsequent degradation of CRY2. In contrast, cytoplasmic SCF(FBXL21) complex-mediated ubiquitination leads to stabilize CRY2 and counteract the activity of the SCF(FBXL3) complex. The SCF(FBXL3) and SCF(FBXL21) complexes probably mediate ubiquitination at different Lys residues. The SCF(FBXL3) complex recognizes and binds CRY2 phosphorylated at Ser-553 and Ser-557. Ubiquitination may be inhibited by PER2. Deubiquitinated by USP7. In terms of tissue distribution, expression in the retina is restricted to the photoreceptor layer (at protein level). Expressed in all tissues examined including heart, brain, spleen, lung, liver, skeletal muscle, kidney and testis. Weak expression in spleen.

It localises to the cytoplasm. The protein resides in the nucleus. Its activity is regulated as follows. KL001 (N-[3-(9H-carbazol-9-yl)-2-hydroxypropyl]-N-(2-furanylmethyl)-methanesulfonamide) binds to CRY1 and stabilizes it by inhibiting FBXL3- and ubiquitin-dependent degradation of CRY1 resulting in lengthening of the circadian periods. KL001-mediated CRY1 stabilization can inhibit glucagon-induced gluconeogenesis in primary hepatocytes. Its function is as follows. Transcriptional repressor which forms a core component of the circadian clock. The circadian clock, an internal time-keeping system, regulates various physiological processes through the generation of approximately 24 hour circadian rhythms in gene expression, which are translated into rhythms in metabolism and behavior. It is derived from the Latin roots 'circa' (about) and 'diem' (day) and acts as an important regulator of a wide array of physiological functions including metabolism, sleep, body temperature, blood pressure, endocrine, immune, cardiovascular, and renal function. Consists of two major components: the central clock, residing in the suprachiasmatic nucleus (SCN) of the brain, and the peripheral clocks that are present in nearly every tissue and organ system. Both the central and peripheral clocks can be reset by environmental cues, also known as Zeitgebers (German for 'timegivers'). The predominant Zeitgeber for the central clock is light, which is sensed by retina and signals directly to the SCN. The central clock entrains the peripheral clocks through neuronal and hormonal signals, body temperature and feeding-related cues, aligning all clocks with the external light/dark cycle. Circadian rhythms allow an organism to achieve temporal homeostasis with its environment at the molecular level by regulating gene expression to create a peak of protein expression once every 24 hours to control when a particular physiological process is most active with respect to the solar day. Transcription and translation of core clock components (CLOCK, NPAS2, BMAL1, BMAL2, PER1, PER2, PER3, CRY1 and CRY2) plays a critical role in rhythm generation, whereas delays imposed by post-translational modifications (PTMs) are important for determining the period (tau) of the rhythms (tau refers to the period of a rhythm and is the length, in time, of one complete cycle). A diurnal rhythm is synchronized with the day/night cycle, while the ultradian and infradian rhythms have a period shorter and longer than 24 hours, respectively. Disruptions in the circadian rhythms contribute to the pathology of cardiovascular diseases, cancer, metabolic syndromes and aging. A transcription/translation feedback loop (TTFL) forms the core of the molecular circadian clock mechanism. Transcription factors, CLOCK or NPAS2 and BMAL1 or BMAL2, form the positive limb of the feedback loop, act in the form of a heterodimer and activate the transcription of core clock genes and clock-controlled genes (involved in key metabolic processes), harboring E-box elements (5'-CACGTG-3') within their promoters. The core clock genes: PER1/2/3 and CRY1/2 which are transcriptional repressors form the negative limb of the feedback loop and interact with the CLOCK|NPAS2-BMAL1|BMAL2 heterodimer inhibiting its activity and thereby negatively regulating their own expression. This heterodimer also activates nuclear receptors NR1D1/2 and RORA/B/G, which form a second feedback loop and which activate and repress BMAL1 transcription, respectively. CRY1 and CRY2 have redundant functions but also differential and selective contributions at least in defining the pace of the SCN circadian clock and its circadian transcriptional outputs. Less potent transcriptional repressor in cerebellum and liver than CRY1, though less effective in lengthening the period of the SCN oscillator. Seems to play a critical role in tuning SCN circadian period by opposing the action of CRY1. With CRY1, dispensable for circadian rhythm generation but necessary for the development of intercellular networks for rhythm synchrony. May mediate circadian regulation of cAMP signaling and gluconeogenesis by blocking glucagon-mediated increases in intracellular cAMP concentrations and in CREB1 phosphorylation. Besides its role in the maintenance of the circadian clock, is also involved in the regulation of other processes. Plays a key role in glucose and lipid metabolism modulation, in part, through the transcriptional regulation of genes involved in these pathways, such as LEP or ACSL4. Represses glucocorticoid receptor NR3C1/GR-induced transcriptional activity by binding to glucocorticoid response elements (GREs). Represses the CLOCK-BMAL1 induced transcription of BHLHE40/DEC1 and NAMPT. Represses PPARD and its target genes in the skeletal muscle and limits exercise capacity. Represses the transcriptional activity of NR1I2. This chain is Cryptochrome-2 (Cry2), found in Mus musculus (Mouse).